A 403-amino-acid polypeptide reads, in one-letter code: Glyceraldehyde-3-phosphate dehydrogenase A, chloroplastic (403 aa).

The transit peptide at 1 to 66 (MASSMLSATT…GGPRRAPTEA (66 aa)) directs the protein to the chloroplast. NADP(+)-binding positions include 77–78 (RI), Asp-102, and Arg-147. Residues 219 to 221 (SCT), Thr-250, Arg-265, 278 to 279 (TG), and Arg-301 each bind D-glyceraldehyde 3-phosphate. The Nucleophile role is filled by Cys-220. Asn-383 serves as a coordination point for NADP(+).

It belongs to the glyceraldehyde-3-phosphate dehydrogenase family. As to quaternary structure, tetramer of either four A chains (GAPDH 2) or two A and two B chains (GAPDH 1).

It localises to the plastid. The protein resides in the chloroplast. It carries out the reaction D-glyceraldehyde 3-phosphate + phosphate + NADP(+) = (2R)-3-phospho-glyceroyl phosphate + NADPH + H(+). Its pathway is carbohydrate biosynthesis; Calvin cycle. This chain is Glyceraldehyde-3-phosphate dehydrogenase A, chloroplastic (GAPA), found in Zea mays (Maize).